The sequence spans 422 residues: Steroid hormone receptor ERR1 (422 aa).

Positions 1–67 are disordered; the sequence is MSSQVVGIEP…GAGPGEQGGG (67 aa). Residues Ser-19 and Ser-22 each carry the phosphoserine modification. Residues 58–67 show a composition bias toward gly residues; that stretch reads GAGPGEQGGG. The nuclear receptor DNA-binding region spans 76–151; the sequence is KRLCLVCGDV…VGMLKEGVRL (76 aa). 2 NR C4-type zinc fingers span residues 79–99 and 115–134; these read CLVCGDVASGYHYGVASCEAC and CPASNECEITKRRRKACQAC. N6-acetyllysine; by PCAF/KAT2B is present on residues Lys-129, Lys-138, Lys-160, and Lys-162. Glycyl lysine isopeptide (Lys-Gly) (interchain with G-Cter in SUMO2) cross-links involve residues Lys-189 and Lys-402. One can recognise an NR LBD domain in the interval 192–420; the sequence is PVNALVSHLL…KLFLEMLEAM (229 aa).

Belongs to the nuclear hormone receptor family. NR3 subfamily. Binds DNA as a monomer or a homodimer. Interacts (via the AF2 domain) with coactivator PPARGC1A (via the L3 motif); the interaction greatly enhances transcriptional activity of genes involved in energy metabolism. Interacts with PIAS4; the interaction enhances sumoylation. Interacts with MAPK15; promotes re-localization of ESRRA to the cytoplasm through a XPO1-dependent mechanism then inhibits ESRRA transcriptional activity. Phosphorylation on Ser-19 enhances sumoylation on Lys-14 increasing repression of transcriptional activity. Post-translationally, sumoylated with SUMO2. Main site is Lys-14 which is enhanced by phosphorylation on Ser-19, cofactor activation, and by interaction with PIAS4. Sumoylation enhances repression of transcriptional activity, but has no effect on subcellular location nor on DNA binding. In terms of processing, reversibly acetylated. Acetylation by PCAF/KAT2 at Lys-129, Lys-138, Lys-160 and Lys-162 and PCAF/KAT2 decreases transcriptional activity probably by inhibiting DNA-binding activity; deacetylation involves SIRT1 and HDAC8 and increases DNA-binding.

It is found in the nucleus. The protein resides in the cytoplasm. Binds to an ERR-alpha response element (ERRE) containing a single consensus half-site, 5'-TNAAGGTCA-3'. Can bind to the medium-chain acyl coenzyme A dehydrogenase (MCAD) response element NRRE-1 and may act as an important regulator of MCAD promoter. May function as a modulator of the estrogen signaling pathway in the uterus. Induces the expression of PERM1 in the skeletal muscle. The polypeptide is Steroid hormone receptor ERR1 (ESRRA) (Canis lupus familiaris (Dog)).